A 726-amino-acid polypeptide reads, in one-letter code: Probable cadmium-transporting ATPase (726 aa).

An HMA domain is found at 11 to 74 (DKQVYRVEGF…AGAFENLKVF (64 aa)). Cd(2+) contacts are provided by C22 and C25. 5 helical membrane passes run 105 to 125 (STLL…FVNG), 129 to 149 (LVTS…LFKV), 163 to 179 (TLMT…GEWA), 335 to 355 (IIMV…GGSW), and 363 to 383 (LAVL…ISIV). D414 serves as the catalytic 4-aspartylphosphate intermediate. The next 2 membrane-spanning stretches (helical) occupy residues 671–693 (LNII…LLVI) and 698–720 (TLWI…SLRL).

Belongs to the cation transport ATPase (P-type) (TC 3.A.3) family. Type IB subfamily.

Its subcellular location is the cell membrane. The catalysed reaction is Cd(2+)(in) + ATP + H2O = Cd(2+)(out) + ADP + phosphate + H(+). Functionally, couples the hydrolysis of ATP with the export of cadmium. The sequence is that of Probable cadmium-transporting ATPase (cadA) from Staphylococcus aureus (strain MRSA252).